The sequence spans 356 residues: NF-kappa-B inhibitor beta (356 aa).

2 positions are modified to phosphoserine; by RPS6KA1: Ser19 and Ser23. ANK repeat units lie at residues 57 to 86 (DGDT…GTEY), 93 to 122 (LGQT…GLCV), and 126 to 155 (RGHT…RRPR). The interval 149-193 (PRPRRPREAPDTYLAQGPDRTPDTNHTPVALYPDSDLEKEEEESE) is disordered. Ser183 is modified (phosphoserine). A compositionally biased stretch (acidic residues) spans 183 to 193 (SDLEKEEEESE). ANK repeat units follow at residues 206-235 (EGHT…DLDK), 240-269 (CGRS…NPAA), and 273-302 (GGRT…PEPE). The interval 298-356 (APEPEGEDEKSGPCSSSSDSDSGDEGDEYDDIVVHSSRSQTRLPPTPASKPLPDDPRPV) is disordered. 2 positions are modified to phosphoserine; by CK2: Ser313 and Ser315. Positions 318 to 328 (DSGDEGDEYDD) are enriched in acidic residues.

This sequence belongs to the NF-kappa-B inhibitor family. Interacts with THRB (via ligand-binding domain). Interacts with RELA and REL. Interacts with COMMD1. Interacts with inhibitor kappa B-interacting Ras-like NKIRAS1 and NKIRAS2. Post-translationally, phosphorylated by RPS6KA1; followed by degradation. Interaction with NKIRAS1 and NKIRAS2 probably prevents phosphorylation. In terms of tissue distribution, expressed in all tissues examined.

The protein localises to the cytoplasm. The protein resides in the nucleus. Its function is as follows. Inhibits NF-kappa-B by complexing with and trapping it in the cytoplasm. However, the unphosphorylated form resynthesized after cell stimulation is able to bind NF-kappa-B allowing its transport to the nucleus and protecting it to further NFKBIA-dependent inactivation. Association with inhibitor kappa B-interacting NKIRAS1 and NKIRAS2 prevent its phosphorylation rendering it more resistant to degradation, explaining its slower degradation. The polypeptide is NF-kappa-B inhibitor beta (NFKBIB) (Homo sapiens (Human)).